A 663-amino-acid chain; its full sequence is Spore germination protein GerIA (663 aa).

The segment covering 1-13 has biased composition (basic residues); that stretch reads MIWNWLRKKKKSN. A disordered region spans residues 1–175; it reads MIWNWLRKKK…SGGNSIYDFT (175 aa). Residues 47–56 show a composition bias toward basic and acidic residues; sequence KNNEQKDSSQ. Low complexity-rich tracts occupy residues 57–72, 88–101, and 122–150; these read DKQQSAKQGDSSQDKQ, PKQGDSSQDKQQSA, and DKQQSAKQGDSSQDKQQSAKQGDSSQDKQ. Transmembrane regions (helical) follow at residues 414–434, 451–471, 491–511, 541–561, and 578–598; these read IFVDGSPSVLLTPVSYFDFFI, ILRLIAVLFSICATPLYVAVL, AQVPFPPLIEALFLELAIDLL, AGLTSNILLIIVALSALASFI, and FLAFAEIGGLFGISLGFIFLF.

Belongs to the GerABKA family.

The protein localises to the cell membrane. Its function is as follows. Required for inosine germination. This chain is Spore germination protein GerIA (gerIA), found in Bacillus cereus.